A 404-amino-acid polypeptide reads, in one-letter code: Advanced glycosylation end product-specific receptor (404 aa).

The first 22 residues, 1–22 (MAAGTAVGAWVLVLSLWGAVVG), serve as a signal peptide directing secretion. In terms of domain architecture, Ig-like V-type spans 23 to 116 (AQNITARIGE…KETKSNYRVR (94 aa)). The Extracellular segment spans residues 23 to 342 (AQNITARIGE…VGGSGLGTLA (320 aa)). Asn25 and Asn81 each carry an N-linked (GlcNAc...) asparagine glycan. Cystine bridges form between Cys38–Cys99 and Cys144–Cys208. Ig-like C2-type domains lie at 124 to 221 (PEIV…RALR) and 227 to 317 (PRVW…RAVS). A helical membrane pass occupies residues 343-363 (LALGILGGLGTAALLIGVILW). Residues 364–404 (QRRQRRGEERKAPENQEEEEERAELNQSEEPEAGESSTGGP) lie on the Cytoplasmic side of the membrane. The interval 367-404 (QRRGEERKAPENQEEEEERAELNQSEEPEAGESSTGGP) is disordered. Positions 378–396 (NQEEEEERAELNQSEEPEA) are enriched in acidic residues. Ser391 is subject to Phosphoserine; by PKC/PRKCZ and ATM.

In terms of assembly, constitutive homodimer; disulfide-linked. Forms homooligomers. Interacts with S100A1 and APP. Interacts with S100B, S100A12 and S100A14. Interacts with TIRAP. Interacts with HMGB1. Interacts with LGP2; this interaction plays an important role in AGER-mediated pro-inflammatory responses and cytokine release. Interacts with double-strand break repair protein MRE11 which is a core component of the MRN complex. The interaction enhances MRE11 endonuclease activity and promotes DNA repair. Interacts with the MCM2-7 complex via interaction with complex member MCM2; the interaction is increased following DNA replication stress and stabilizes the MCM2-7 complex at replication forks. Interacts with longistatin, a protein from the saliva of the tick, Haemaphysalis longicornis; the interaction attenuates AGER-mediated production of reactive oxygen species (ROS), activation of NF-kappa-B and expression of adhesion molecules and cytokines in human endothelial cells. Post-translationally, phosphorylated on its cytoplasmic domain by PKCzeta/PRKCZ upon ligand binding. Phosphorylated by ATM following DNA damage. Targeted by the ubiquitin E3 ligase subunit FBXO10 to mediate its ubiquitination and degradation. In terms of tissue distribution, endothelial cells. Increased expression in pre-term labor and preeclampsia placentas compared to controls.

It is found in the cell membrane. The protein localises to the cell projection. Its subcellular location is the phagocytic cup. It localises to the early endosome. The protein resides in the nucleus. It is found in the secreted. In terms of biological role, cell surface pattern recognition receptor that senses endogenous stress signals with a broad ligand repertoire including advanced glycation end products, S100 proteins, high-mobility group box 1 protein/HMGB1, amyloid beta/APP oligomers, nucleic acids, histones, phospholipids and glycosaminoglycans. Advanced glycosylation end products are nonenzymatically glycosylated proteins which accumulate in vascular tissue in aging and at an accelerated rate in diabetes. These ligands accumulate at inflammatory sites during the pathogenesis of various diseases including diabetes, vascular complications, neurodegenerative disorders and cancers, and RAGE transduces their binding into pro-inflammatory responses. Upon ligand binding, uses TIRAP and MYD88 as adapters to transduce the signal ultimately leading to the induction of inflammatory cytokines IL6, IL8 and TNFalpha through activation of NF-kappa-B. Interaction with S100A12 on endothelium, mononuclear phagocytes, and lymphocytes triggers cellular activation, with generation of key pro-inflammatory mediators. Interaction with S100B after myocardial infarction may play a role in myocyte apoptosis by activating ERK1/2 and p53/TP53 signaling. Contributes to the translocation of amyloid-beta peptide (ABPP) across the cell membrane from the extracellular to the intracellular space in cortical neurons. ABPP-initiated RAGE signaling, especially stimulation of p38 mitogen-activated protein kinase (MAPK), has the capacity to drive a transport system delivering ABPP as a complex with RAGE to the intraneuronal space. Participates in endothelial albumin transcytosis together with HMGB1 through the RAGE/SRC/Caveolin-1 pathway, leading to endothelial hyperpermeability. Mediates the loading of HMGB1 in extracellular vesicles (EVs) that shuttle HMGB1 to hepatocytes by transferrin-mediated endocytosis and subsequently promote hepatocyte pyroptosis by activating the NLRP3 inflammasome. Binds to DNA and promotes extracellular hypomethylated DNA (CpG DNA) uptake by cells via the endosomal route to activate inflammatory responses. Mediates phagocytosis by non-professional phagocytes (NPP) and this is enhanced by binding to ligands including RNA, DNA, HMGB1 and histones. Promotes NPP-mediated phagocytosis of Saccharomyces cerevisiae spores by binding to RNA attached to the spore wall. Also promotes NPP-mediated phagocytosis of apoptotic cells. Following DNA damage, recruited to DNA double-strand break sites where it colocalizes with the MRN repair complex via interaction with double-strand break repair protein MRE11. Enhances the endonuclease activity of MRE11, promoting the end resection of damaged DNA. Promotes DNA damage repair in trophoblasts which enhances trophoblast invasion and contributes to placental development and maintenance. Protects cells from DNA replication stress by localizing to damaged replication forks where it stabilizes the MCM2-7 complex and promotes faithful progression of the replication fork. Mediates the production of reactive oxygen species (ROS) in human endothelial cells. The chain is Advanced glycosylation end product-specific receptor (AGER) from Homo sapiens (Human).